Here is a 500-residue protein sequence, read N- to C-terminus: Glucosylglycerol-phosphate synthase (500 aa).

This sequence belongs to the glycosyltransferase 20 family.

The catalysed reaction is ADP-alpha-D-glucose + sn-glycerol 3-phosphate = 2-O-(alpha-D-glucopyranosyl)-sn-glycerol 3-phosphate + ADP + H(+). It functions in the pathway glycan metabolism; glucosylglycerol biosynthesis. In terms of biological role, involved in salt tolerance by producing GG-phosphate from ADP-glucose and glycerol-3-phosphate (G3P), an intermediate in the synthesis of the osmolyte glucosylglycerol (GG). This chain is Glucosylglycerol-phosphate synthase (ggpS), found in Picosynechococcus sp. (strain ATCC 27264 / PCC 7002 / PR-6) (Agmenellum quadruplicatum).